The primary structure comprises 436 residues: 3-ketoacyl-CoA thiolase (436 aa).

C99 (acyl-thioester intermediate) is an active-site residue. Catalysis depends on proton acceptor residues H392 and C422.

This sequence belongs to the thiolase-like superfamily. Thiolase family. As to quaternary structure, heterotetramer of two alpha chains (FadJ) and two beta chains (FadI).

Its subcellular location is the cytoplasm. It catalyses the reaction an acyl-CoA + acetyl-CoA = a 3-oxoacyl-CoA + CoA. Its pathway is lipid metabolism; fatty acid beta-oxidation. Its function is as follows. Catalyzes the final step of fatty acid oxidation in which acetyl-CoA is released and the CoA ester of a fatty acid two carbons shorter is formed. In Escherichia coli O127:H6 (strain E2348/69 / EPEC), this protein is 3-ketoacyl-CoA thiolase.